A 215-amino-acid polypeptide reads, in one-letter code: Pyridoxine/pyridoxamine 5'-phosphate oxidase (215 aa).

Residues 9-12 (RRDY) and Lys69 contribute to the substrate site. FMN contacts are provided by residues 64–69 (RILLLK), 79–80 (FT), Lys86, and Gln108. Residues Tyr126, Arg130, and Ser134 each contribute to the substrate site. Residues 143 to 144 (QS) and Trp188 each bind FMN. A substrate-binding site is contributed by 194-196 (RLH). Residue Arg198 coordinates FMN.

The protein belongs to the pyridoxamine 5'-phosphate oxidase family. In terms of assembly, homodimer. FMN is required as a cofactor.

It catalyses the reaction pyridoxamine 5'-phosphate + O2 + H2O = pyridoxal 5'-phosphate + H2O2 + NH4(+). The catalysed reaction is pyridoxine 5'-phosphate + O2 = pyridoxal 5'-phosphate + H2O2. It functions in the pathway cofactor metabolism; pyridoxal 5'-phosphate salvage; pyridoxal 5'-phosphate from pyridoxamine 5'-phosphate: step 1/1. Its pathway is cofactor metabolism; pyridoxal 5'-phosphate salvage; pyridoxal 5'-phosphate from pyridoxine 5'-phosphate: step 1/1. Catalyzes the oxidation of either pyridoxine 5'-phosphate (PNP) or pyridoxamine 5'-phosphate (PMP) into pyridoxal 5'-phosphate (PLP). This chain is Pyridoxine/pyridoxamine 5'-phosphate oxidase, found in Pseudomonas fluorescens (strain Pf0-1).